The primary structure comprises 382 residues: Anhydro-N-acetylmuramic acid kinase (382 aa).

22-29 lines the ATP pocket; it reads GTSMDGVD.

It belongs to the anhydro-N-acetylmuramic acid kinase family.

It catalyses the reaction 1,6-anhydro-N-acetyl-beta-muramate + ATP + H2O = N-acetyl-D-muramate 6-phosphate + ADP + H(+). Its pathway is amino-sugar metabolism; 1,6-anhydro-N-acetylmuramate degradation. It participates in cell wall biogenesis; peptidoglycan recycling. Catalyzes the specific phosphorylation of 1,6-anhydro-N-acetylmuramic acid (anhMurNAc) with the simultaneous cleavage of the 1,6-anhydro ring, generating MurNAc-6-P. Is required for the utilization of anhMurNAc either imported from the medium or derived from its own cell wall murein, and thus plays a role in cell wall recycling. The chain is Anhydro-N-acetylmuramic acid kinase from Burkholderia ambifaria (strain ATCC BAA-244 / DSM 16087 / CCUG 44356 / LMG 19182 / AMMD) (Burkholderia cepacia (strain AMMD)).